We begin with the raw amino-acid sequence, 655 residues long: Inactive serine protease scarface (655 aa).

A signal peptide spans 1–24 (MSASHFREQLALCITLAVLAAASG). Polar residues-rich tracts occupy residues 213-225 (TQAP…TTAV) and 237-252 (PSTT…QTSR). Positions 213–319 (TQAPFRPQPT…QPSNQKPIYR (107 aa)) are disordered. The segment at 343–407 (KCASALVCTS…PNYVDPWPVN (65 aa)) is CLIP. Intrachain disulfides connect cysteine 344/cysteine 394, cysteine 350/cysteine 383, cysteine 356/cysteine 395, cysteine 450/cysteine 466, cysteine 547/cysteine 605, cysteine 579/cysteine 587, and cysteine 595/cysteine 623. The Peptidase S1 domain maps to 421–644 (PTGVKDLDAN…DIKWINTAFA (224 aa)).

It belongs to the peptidase S1 family.

It is found in the secreted. Functionally, inactive serine protease that plays a role in germ-band retraction and dorsal closure morphogenesis in embryogenesis; contributes to amnioserosa attachment and epithelial apico-basal polarity by regulating the localization of laminin LanA on the apical side of the amnioserosa epithelium. Contributes to epithelial morphogenesis probably by regulating the bsk/JNK pathway, as part of a negative-feedback loop, and by modulating the cross-talk between the Egfr, bsk/JNK and dpp signal transduction pathways. In larval development, antagonizes the morphogenetic movements controlled by the bsk/JNK signaling including male genitalia formation and thorax development. This Drosophila melanogaster (Fruit fly) protein is Inactive serine protease scarface.